A 100-amino-acid polypeptide reads, in one-letter code: Small ribosomal subunit protein uS14c (100 aa).

This sequence belongs to the universal ribosomal protein uS14 family. Part of the 30S ribosomal subunit.

The protein localises to the plastid. The protein resides in the chloroplast. Functionally, binds 16S rRNA, required for the assembly of 30S particles. This Cyanidioschyzon merolae (strain NIES-3377 / 10D) (Unicellular red alga) protein is Small ribosomal subunit protein uS14c.